Reading from the N-terminus, the 399-residue chain is Sperm equatorial segment protein 1 (399 aa).

A signal peptide spans 1–18; it reads MKLVVLVALWLWPSSLLA. Residue Asn-128 is glycosylated (N-linked (GlcNAc...) asparagine). The segment covering 136–145 has biased composition (basic and acidic residues); the sequence is EEPFIEKEPE. A disordered region spans residues 136 to 250; the sequence is EEPFIEKEPE…PSAEDLPGRH (115 aa). A compositionally biased stretch (acidic residues) spans 157–167; it reads PEPELEPEPEP. Over residues 182–206 the composition is skewed to polar residues; that stretch reads VTSTTPNKELTGTSRISSMATQPAN. The span at 207-225 shows a compositional bias: low complexity; sequence TQATRITVTVKTTSTMDVS.

It belongs to the SPESP1 family. In terms of processing, glycosylated. In testis there are two predominant forms of 77- and 67-kDa and a form of 47-kDa, whereas in epididymal sperm from caput, corpus, and cauda there are two forms of 47- and 43-kDa. Testis forms contain complex carbohydrate residues. Epididymal sperm forms are N-glycosylated. Then undergoes significant glycosylation in the testis and that the majority of these glycoconjugates are removed by the time sperm reach the caput epididymis. As to expression, testis specific.

It is found in the cytoplasmic vesicle. It localises to the secretory vesicle. The protein localises to the acrosome. In terms of biological role, involved in fertilization ability of sperm. This is Sperm equatorial segment protein 1 from Mus musculus (Mouse).